The primary structure comprises 240 residues: RNA-free ribonuclease P (240 aa).

The protein belongs to the HARP family.

It carries out the reaction Endonucleolytic cleavage of RNA, removing 5'-extranucleotides from tRNA precursor.. RNA-free RNase P that catalyzes the removal of the 5'-leader sequence from pre-tRNA to produce the mature 5'-terminus. This is RNA-free ribonuclease P from Methanococcus aeolicus (strain ATCC BAA-1280 / DSM 17508 / OCM 812 / Nankai-3).